The primary structure comprises 196 residues: GTP cyclohydrolase 1 (196 aa).

C86, H89, and C158 together coordinate Zn(2+).

The protein belongs to the GTP cyclohydrolase I family. As to quaternary structure, homomer.

The enzyme catalyses GTP + H2O = 7,8-dihydroneopterin 3'-triphosphate + formate + H(+). The protein operates within cofactor biosynthesis; 7,8-dihydroneopterin triphosphate biosynthesis; 7,8-dihydroneopterin triphosphate from GTP: step 1/1. The chain is GTP cyclohydrolase 1 from Clostridium botulinum (strain Loch Maree / Type A3).